The primary structure comprises 161 residues: Anther-specific protein LAT52 (161 aa).

Residues 1-17 (MAKAIVLLSALCILALA) form the signal peptide. Cystine bridges form between Cys35–Cys106, Cys38–Cys147, and Cys59–Cys94. The N-linked (GlcNAc...) asparagine glycan is linked to Asn61.

The protein belongs to the Ole e I family. As to expression, expressed in anthers and pollen.

Functionally, may play a role during germination or early tube growth. The chain is Anther-specific protein LAT52 (LAT52) from Solanum lycopersicum (Tomato).